Reading from the N-terminus, the 557-residue chain is MPRIHILDEETVSRIAAGEVIERPASVVKELIENSIDAGASRIIIEVENGGISLIKLVDDGCGIEREDLPLAFQRHATSKISTADDLFRLKTLGFRGEALSAIASVSKCVEVHTRTRYSPVGTYLRLENGRVAEIKDDGCPYGTSIEVRGLFETIPARLKHLSSPSQELARIAEIVTQMAIIHHRISFELSSGRRTLFRSNASETWDDALIRAFGLRTAKGMISIIAEGDGFDLHGMISSHDSSHHGSELILVYVNSRPVYSKVVVQALREAYRGFLQSGRSPLAVISIEIEPSLVDVNVHPAKREVRFLREDEVYDAVRDAALSALRSSAIPSPPPPARIAEPQLWSAKPQIQRTLPLEVQAEQRISEPLIRIVGQALDLYIIVEDDDGIMLVDQHAAAERIRYEHLLEKCKSGSISQELIQPVTVELSPGEVALLDSFSGELGEIGFEIDPFGGRAYSVRSVPAAAGLESPESIRDVLREILNLGRVCRASFRDEALKHLACRGSIKSGERLSESAMLRLLTDLFACDNPRTCPHGRPVVVRISSESLEKMFGRR.

Belongs to the DNA mismatch repair MutL/HexB family.

This protein is involved in the repair of mismatches in DNA. It is required for dam-dependent methyl-directed DNA mismatch repair. May act as a 'molecular matchmaker', a protein that promotes the formation of a stable complex between two or more DNA-binding proteins in an ATP-dependent manner without itself being part of a final effector complex. This is DNA mismatch repair protein MutL from Methanothrix thermoacetophila (strain DSM 6194 / JCM 14653 / NBRC 101360 / PT) (Methanosaeta thermophila).